A 353-amino-acid polypeptide reads, in one-letter code: UDP-xylose transporter 2 (353 aa).

The next 10 membrane-spanning stretches (helical) occupy residues 7–27 (FQLGTIGALSLSVVSSVSIVI), 31–51 (ALISTLGFTFATTLTSWHLLV), 75–95 (VLGFGVLNGISIGLLNLSLGF), 100–120 (FYQMTKLAIIPCTVVLETIFF), 132–152 (LVILLLGVGIATVTDLQLNML), 154–174 (SVLSLLAVITTCVAQIMTNTI), 194–214 (AITLFVTGPFLDGLLTNQNVF), 224–244 (FFIVLSCLISVSVNFSTFLVI), 250–270 (VTYQVLGHLKTCLVLAFGYLL), and 280–300 (ILGILVAVIGMVLYSYYCTLE). The disordered stretch occupies residues 308–353 (TSTQLPQMDENEKDPLVSAENGSGLISDNGVQKQDPVWNSNKDFQA). A compositionally biased stretch (polar residues) spans 327–353 (ENGSGLISDNGVQKQDPVWNSNKDFQA). Position 334 is a phosphoserine (S334).

The protein belongs to the TPT transporter family. TPT (TC 2.A.7.9) subfamily. Ubiquitous.

Its subcellular location is the golgi apparatus membrane. Functionally, nucleotide-sugar transporter that transports UDP-xylose and UMP in a strict counter-exchange mode. In Arabidopsis thaliana (Mouse-ear cress), this protein is UDP-xylose transporter 2.